Reading from the N-terminus, the 207-residue chain is Elongation factor 1-beta (207 aa).

At Ala-2 the chain carries N-acetylalanine. Positions Phe-70–Glu-96 are disordered. Positions Glu-80–Glu-96 are enriched in acidic residues. Ser-90 is subject to Phosphoserine; by CK2.

The protein belongs to the EF-1-beta/EF-1-delta family. As to quaternary structure, EF-1 is composed of 4 subunits: alpha, beta, delta, and gamma. Post-translationally, phosphorylation affects the GDP/GTP exchange rate.

In terms of biological role, EF-1-beta and EF-1-delta stimulate the exchange of GDP bound to EF-1-alpha to GTP. The chain is Elongation factor 1-beta from Artemia salina (Brine shrimp).